The primary structure comprises 175 residues: 3-hydroxydecanoyl-[acyl-carrier-protein] dehydratase (175 aa).

His74 is an active-site residue.

The protein belongs to the thioester dehydratase family. FabA subfamily. Homodimer.

The protein resides in the cytoplasm. The enzyme catalyses a (3R)-hydroxyacyl-[ACP] = a (2E)-enoyl-[ACP] + H2O. It catalyses the reaction (3R)-hydroxydecanoyl-[ACP] = (2E)-decenoyl-[ACP] + H2O. The catalysed reaction is (2E)-decenoyl-[ACP] = (3Z)-decenoyl-[ACP]. It participates in lipid metabolism; fatty acid biosynthesis. Functionally, necessary for the introduction of cis unsaturation into fatty acids. Catalyzes the dehydration of (3R)-3-hydroxydecanoyl-ACP to E-(2)-decenoyl-ACP and then its isomerization to Z-(3)-decenoyl-ACP. Can catalyze the dehydratase reaction for beta-hydroxyacyl-ACPs with saturated chain lengths up to 16:0, being most active on intermediate chain length. The sequence is that of 3-hydroxydecanoyl-[acyl-carrier-protein] dehydratase from Alcanivorax borkumensis (strain ATCC 700651 / DSM 11573 / NCIMB 13689 / SK2).